The primary structure comprises 454 residues: Zinc finger CCCH domain-containing protein 66 (454 aa).

Over residues 1–23 (MAAGAGAGGGGGEGDSNGGGTSP) the composition is skewed to gly residues. The segment at 1-30 (MAAGAGAGGGGGEGDSNGGGTSPGGVSAAA) is disordered. 5 consecutive C3H1-type zinc fingers follow at residues 66–94 (RIGE…HPPN), 111–139 (RVGQ…HPRE), 157–185 (RPNE…HPQP), 318–346 (RPDQ…HPKE), and 364–392 (RPGE…HPMG). The disordered stretch occupies residues 405–454 (DVSSMHYQLSPSPGHPGILLDGGSGRSHRVPQSDSQQIPSGDGNAEREAS). Positions 434–443 (VPQSDSQQIP) are enriched in polar residues.

The polypeptide is Zinc finger CCCH domain-containing protein 66 (Oryza sativa subsp. japonica (Rice)).